Consider the following 461-residue polypeptide: tRNA modification GTPase MnmE (461 aa).

Residues Arg20, Glu85, and Lys124 each contribute to the (6S)-5-formyl-5,6,7,8-tetrahydrofolate site. The TrmE-type G domain occupies 221-383 (GIPVAIIGET…LQQLLTEVSS (163 aa)). Asn231 is a binding site for K(+). GTP contacts are provided by residues 231–236 (NAGKST), 250–256 (SDIHGTT), and 275–278 (DTAG). Ser235 is a binding site for Mg(2+). 3 residues coordinate K(+): Ser250, Ile252, and Thr255. Position 256 (Thr256) interacts with Mg(2+). Lys461 lines the (6S)-5-formyl-5,6,7,8-tetrahydrofolate pocket.

Belongs to the TRAFAC class TrmE-Era-EngA-EngB-Septin-like GTPase superfamily. TrmE GTPase family. As to quaternary structure, homodimer. Heterotetramer of two MnmE and two MnmG subunits. K(+) serves as cofactor.

The protein resides in the cytoplasm. In terms of biological role, exhibits a very high intrinsic GTPase hydrolysis rate. Involved in the addition of a carboxymethylaminomethyl (cmnm) group at the wobble position (U34) of certain tRNAs, forming tRNA-cmnm(5)s(2)U34. This is tRNA modification GTPase MnmE from Parabacteroides distasonis (strain ATCC 8503 / DSM 20701 / CIP 104284 / JCM 5825 / NCTC 11152).